We begin with the raw amino-acid sequence, 311 residues long: Heparan sulfate glucosamine 3-O-sulfotransferase 1 (311 aa).

The signal sequence occupies residues 1–20 (MTLLLLGAVLLVAQPQLVPS). N-linked (GlcNAc...) asparagine glycosylation occurs at N52. Residues 68–72 (KGGTR), R151, and S159 each bind 3'-phosphoadenylyl sulfate. N-linked (GlcNAc...) asparagine glycosylation is found at N196, N246, and N253. Y259 contacts 3'-phosphoadenylyl sulfate. A disulfide bond links C260 and C269. 274 to 278 (KGRAH) is a 3'-phosphoadenylyl sulfate binding site.

The protein belongs to the sulfotransferase 1 family.

The protein localises to the golgi apparatus lumen. It catalyses the reaction alpha-D-glucosaminyl-[heparan sulfate](n) + 3'-phosphoadenylyl sulfate = 3-sulfo-alpha-D-glucosaminyl-[heparan sulfate](n) + adenosine 3',5'-bisphosphate + H(+). In terms of biological role, sulfotransferase that utilizes 3'-phospho-5'-adenylyl sulfate (PAPS) to catalyze the transfer of a sulfo group to position 3 of glucosamine residues in heparan. Catalyzes the rate limiting step in the biosynthesis of heparan sulfate (HSact). This modification is a crucial step in the biosynthesis of anticoagulant heparan sulfate as it completes the structure of the antithrombin pentasaccharide binding site. In Rattus norvegicus (Rat), this protein is Heparan sulfate glucosamine 3-O-sulfotransferase 1 (Hs3st1).